The primary structure comprises 484 residues: Serine hydroxymethyltransferase, cytosolic (484 aa).

At Ala2 the chain carries N-acetylalanine. A Deamidated asparagine; alternate modification is found at Asn6. The isoaspartyl glycine isopeptide (Asn-Gly); alternate cross-link spans Asn6 to Gly7. The active-site Nucleophile is the Cys204. The active-site Proton donor is the His256. Lys257 is subject to N6-(pyridoxal phosphate)lysine.

The protein belongs to the SHMT family. In terms of assembly, homotetramer. Identified in complex with ABRAXAS2 and the other subunits of the BRISC complex, at least composed of ABRAXAS2, BRCC3/BRCC36, BABAM2 and BABAM1/NBA1. Requires pyridoxal 5'-phosphate as cofactor. Deamidation of asparagine produces alternatively aspartate or isoaspartate, which in turn can be converted to aspartate through carboxylmethylation/demethylation.

Its subcellular location is the cytoplasm. The enzyme catalyses (6R)-5,10-methylene-5,6,7,8-tetrahydrofolate + glycine + H2O = (6S)-5,6,7,8-tetrahydrofolate + L-serine. The protein operates within one-carbon metabolism; tetrahydrofolate interconversion. Functionally, interconversion of serine and glycine. This Oryctolagus cuniculus (Rabbit) protein is Serine hydroxymethyltransferase, cytosolic (SHMT1).